The sequence spans 68 residues: MSSGASASALQRLVEQLKLEAGVERIKVSQAAAELQQYCMQNACKDALLVGVPAGSNPFREPRSCALL.

Ser-2 carries the post-translational modification N-acetylserine. At Cys-65 the chain carries Cysteine methyl ester. A lipid anchor (S-geranylgeranyl cysteine) is attached at Cys-65. Positions 66 to 68 (ALL) are cleaved as a propeptide — removed in mature form.

Belongs to the G protein gamma family. In terms of assembly, g proteins are composed of 3 units, alpha, beta and gamma. As to expression, abundantly and ubiquitously expressed.

The protein resides in the cell membrane. Guanine nucleotide-binding proteins (G proteins) are involved as a modulator or transducer in various transmembrane signaling systems. The beta and gamma chains are required for the GTPase activity, for replacement of GDP by GTP, and for G protein-effector interaction. Interacts with beta-1 and beta-2, but not with beta-3. The chain is Guanine nucleotide-binding protein G(I)/G(S)/G(O) subunit gamma-10 (GNG10) from Homo sapiens (Human).